We begin with the raw amino-acid sequence, 63 residues long: U2-agatoxin-Ao1v (63 aa).

An N-terminal signal peptide occupies residues 1-14 (LLLISAMVGSMIAA). Positions 15–28 (VPEEESLQLSEDER) are excised as a propeptide. Intrachain disulfides connect Cys-31-Cys-47, Cys-38-Cys-52, and Cys-46-Cys-62.

Belongs to the neurotoxin 01 (U2-agtx) family. Expressed by the venom gland.

It localises to the secreted. In terms of biological role, insect active toxin causing rapid but reversible paralysis in crickets. No activity shown in mammals. Does not show effect on mammalian voltage-gated calcium channels. This Agelena orientalis (Funnel-web spider) protein is U2-agatoxin-Ao1v.